The primary structure comprises 571 residues: Proline--tRNA ligase (571 aa).

Belongs to the class-II aminoacyl-tRNA synthetase family. ProS type 1 subfamily. As to quaternary structure, homodimer.

Its subcellular location is the cytoplasm. The enzyme catalyses tRNA(Pro) + L-proline + ATP = L-prolyl-tRNA(Pro) + AMP + diphosphate. Functionally, catalyzes the attachment of proline to tRNA(Pro) in a two-step reaction: proline is first activated by ATP to form Pro-AMP and then transferred to the acceptor end of tRNA(Pro). As ProRS can inadvertently accommodate and process non-cognate amino acids such as alanine and cysteine, to avoid such errors it has two additional distinct editing activities against alanine. One activity is designated as 'pretransfer' editing and involves the tRNA(Pro)-independent hydrolysis of activated Ala-AMP. The other activity is designated 'posttransfer' editing and involves deacylation of mischarged Ala-tRNA(Pro). The misacylated Cys-tRNA(Pro) is not edited by ProRS. The polypeptide is Proline--tRNA ligase (Pseudomonas entomophila (strain L48)).